A 209-amino-acid chain; its full sequence is uncharacterized protein (209 aa).

The next 3 membrane-spanning stretches (helical) occupy residues 10 to 32, 37 to 59, and 64 to 86; these read AVVI…YLAF, LRYV…TGLI, and FIYF…ILYV.

It localises to the cell membrane. This is an uncharacterized protein from Aquifex aeolicus (strain VF5).